A 264-amino-acid chain; its full sequence is Apolipoprotein A-I (264 aa).

The N-terminal stretch at 1–18 (MKAVVLALAVLFLTGSQA) is a signal peptide. 2 consecutive repeat copies span residues 67–88 (LHLLDNWDTLSNTVGRLREQLG) and 89–110 (PVTHEFWANLEKDTEWLRQEMN). The 10 X approximate tandem repeats stretch occupies residues 67 to 264 (LHLLDNWDTL…DEASKKLNAQ (198 aa)). Met-109 carries the methionine sulfoxide modification. Residues 111 to 121 (KDLEEVKVKVQ) form a 3; half-length repeat. 5 tandem repeats follow at residues 122–143 (PYLDDFQKKWQEEVERYREKVG), 144–165 (PLGAELREGARQKLQELHEKLT), 166–187 (PLGEDLRDRARVHVDALRTQLA), 188–207 (PYSDQMRERLATRLAAIRDS), and 208–229 (PSLAVYHAKASEHLKTLSEKAK). A 9; half-length repeat occupies 230–240 (PALEDLRQGLM). The stretch at 241–264 (PVLENLKTTVLAAIDEASKKLNAQ) is repeat 10.

It belongs to the apolipoprotein A1/A4/E family. In terms of assembly, homodimer. Interacts with APOA1BP and CLU. Component of a sperm activating protein complex (SPAP), consisting of APOA1, an immunoglobulin heavy chain, an immunoglobulin light chain and albumin. Interacts with NDRG1. Interacts with SCGB3A2. Interacts with NAXE and YJEFN3. Glycosylated. In terms of processing, palmitoylated. Post-translationally, phosphorylation sites are present in the extracellular medium.

It is found in the secreted. In terms of biological role, participates in the reverse transport of cholesterol from tissues to the liver for excretion by promoting cholesterol efflux from tissues and by acting as a cofactor for the lecithin cholesterol acyltransferase (LCAT). As part of the SPAP complex, activates spermatozoa motility. The polypeptide is Apolipoprotein A-I (APOA1) (Jaculus jaculus (Lesser Egyptian jerboa)).